Consider the following 287-residue polypeptide: Phosphoribosylaminoimidazole-succinocarboxamide synthase (287 aa).

Belongs to the SAICAR synthetase family.

The enzyme catalyses 5-amino-1-(5-phospho-D-ribosyl)imidazole-4-carboxylate + L-aspartate + ATP = (2S)-2-[5-amino-1-(5-phospho-beta-D-ribosyl)imidazole-4-carboxamido]succinate + ADP + phosphate + 2 H(+). Its pathway is purine metabolism; IMP biosynthesis via de novo pathway; 5-amino-1-(5-phospho-D-ribosyl)imidazole-4-carboxamide from 5-amino-1-(5-phospho-D-ribosyl)imidazole-4-carboxylate: step 1/2. The sequence is that of Phosphoribosylaminoimidazole-succinocarboxamide synthase from Neisseria meningitidis serogroup C (strain 053442).